Here is a 109-residue protein sequence, read N- to C-terminus: Flagellar hook-basal body complex protein FliE (109 aa).

The segment at 1 to 38 is disordered; that stretch reads MQAIHNDKSLLSPFSELNTDNRTKREESGSTFKEQKGG. Residues 19 to 38 are compositionally biased toward basic and acidic residues; that stretch reads TDNRTKREESGSTFKEQKGG.

It belongs to the FliE family.

Its subcellular location is the bacterial flagellum basal body. This chain is Flagellar hook-basal body complex protein FliE, found in Helicobacter pylori (strain P12).